Here is a 444-residue protein sequence, read N- to C-terminus: Multidrug resistance protein MdtA (444 aa).

Residues 1 to 20 form the signal peptide; it reads MKSQSKRTSRLFVFVGVVVA. Over residues 37–52 the composition is skewed to polar residues; sequence NNTSGAQQSARGQDTS. Disordered stretches follow at residues 37–60 and 398–444; these read NNTSGAQQSARGQDTSHGGRRNTP and TPRS…AEKS. A compositionally biased stretch (low complexity) spans 409–419; that stretch reads ASAEKAAAEAE. The segment covering 435–444 has biased composition (polar residues); that stretch reads ARSTTAAEKS.

It belongs to the membrane fusion protein (MFP) (TC 8.A.1) family. As to quaternary structure, part of a tripartite efflux system composed of MdtA, MdtB and MdtC.

Its subcellular location is the cell inner membrane. The sequence is that of Multidrug resistance protein MdtA from Yersinia pseudotuberculosis serotype O:3 (strain YPIII).